Reading from the N-terminus, the 506-residue chain is Transcription factor CP2 (506 aa).

Residues 61 to 300 (ENKILPFQYV…SPGFNSSHNS (240 aa)) form the Grh/CP2 DB domain. Residues 133-395 (EHQQLEGWRW…LFNALKGRIV (263 aa)) form a DNA-binding region. Disordered stretches follow at residues 238 to 268 (FKPK…YQPS) and 291 to 316 (SPGF…QPEP). Positions 241–265 (KGADRKQKTDREKMEKRTPQEKEKY) are enriched in basic and acidic residues. The span at 291 to 300 (SPGFNSSHNS) shows a compositional bias: polar residues.

Belongs to the grh/CP2 family. CP2 subfamily. As to quaternary structure, component of the SSP (stage selector protein) complex, which appears to be a heteromer of TFCP2 and 2 copies of NFE4.

The protein localises to the nucleus. Functionally, may function as a transcription factor. The polypeptide is Transcription factor CP2 (tfcp2) (Xenopus laevis (African clawed frog)).